The primary structure comprises 124 residues: Small ribosomal subunit protein uS12 (124 aa).

Asp89 carries the post-translational modification 3-methylthioaspartic acid. Lys108 is modified (N6-acetyllysine).

It belongs to the universal ribosomal protein uS12 family. Part of the 30S ribosomal subunit. Contacts proteins S8 and S17. May interact with IF1 in the 30S initiation complex.

With S4 and S5 plays an important role in translational accuracy. In terms of biological role, interacts with and stabilizes bases of the 16S rRNA that are involved in tRNA selection in the A site and with the mRNA backbone. Located at the interface of the 30S and 50S subunits, it traverses the body of the 30S subunit contacting proteins on the other side and probably holding the rRNA structure together. The combined cluster of proteins S8, S12 and S17 appears to hold together the shoulder and platform of the 30S subunit. This is Small ribosomal subunit protein uS12 from Escherichia coli O6:K15:H31 (strain 536 / UPEC).